The chain runs to 268 residues: AN1-type zinc finger protein 1 (268 aa).

Position 2 is an N-acetylalanine (alanine 2). 2 consecutive AN1-type zinc fingers follow at residues 4 to 52 (LDIG…VVKE) and 58 to 106 (EHKS…VAKP). Cysteine 10, cysteine 15, cysteine 25, cysteine 28, cysteine 33, histidine 36, histidine 42, cysteine 44, cysteine 64, cysteine 69, cysteine 79, cysteine 82, cysteine 87, histidine 90, histidine 96, and cysteine 98 together coordinate Zn(2+). A ubiquitin-like region spans residues 160-260 (QTERTYFQVY…EYLNDEEQFL (101 aa)).

In terms of assembly, associates with the 26S proteasome; this association occurs upon exposure to arsenite and is reduced in the presence of ATP. Interacts (via AN1-type 1 and 2 zinc fingers) with PSMD1; this interaction is increased upon arsenite treatment and occurs in an ATP-independent manner. Interacts with PSMC4. Interacts with PSMA1. Interacts (via its ubiquitin-like region) with VCP; this interaction occurs in an arsenite-dependent manner and is necessary for the recruitment of the ubiquitin-selective ATPase VCP to stress granules (SGs).

It is found in the cytoplasm. The protein resides in the stress granule. Its function is as follows. Plays a role in the regulation of cytoplasmic stress granules (SGs) turnover. SGs are dynamic and transient cytoplasmic ribonucleoprotein assemblies important for cellular protein homeostasis when protein production is suspended after acute exogenous stress. Associates with SGs and is involved in the efficient and specific arsenite-induced clearance process of SGs through the recruitment of the ubiquitin-selective ATPase VCP and the 26S proteasome. This process requires both complexes for efficient degradation of damaged ubiquitinated SG proteins during recovery from arsenite stress, and hence avoiding aberrant cytoplasmic SGs degradation via autophagy. The chain is AN1-type zinc finger protein 1 from Mus musculus (Mouse).